Consider the following 98-residue polypeptide: Large ribosomal subunit protein eL21 (98 aa).

The span at 1 to 24 shows a compositional bias: basic residues; it reads MVKKAHSFRRKTRGKLSKHPRRRG. Residues 1-27 form a disordered region; that stretch reads MVKKAHSFRRKTRGKLSKHPRRRGLPP.

The protein belongs to the eukaryotic ribosomal protein eL21 family.

This is Large ribosomal subunit protein eL21 from Thermococcus gammatolerans (strain DSM 15229 / JCM 11827 / EJ3).